The sequence spans 347 residues: NADH-ubiquinone oxidoreductase chain 2 (347 aa).

The next 11 membrane-spanning stretches (helical) occupy residues 3–23, 25–45, 59–79, 96–116, 122–142, 149–169, 178–198, 201–221, 237–257, 274–294, and 323–343; these read PPIFIIIMSTVISGTVIVMTS, HWMLTWIGFEMNMLAIIPILM, YFLTQATASMLLMMGIIINLL, ILMTTALAMKLGLAPFHFWVP, ISLSSGMILLTWQKIAPLSIL, INPHLLLPMAILSVLIGGWGG, IMAYSSIAHMGWMAAILLYNP, MFLNLIIYITMTLTTFMLFML, APLITSLILTLMLSLGGLPPL, EMIILPTFLAITALLNLYFYM, and TIFLPPLIIISTMMLPLTPMI.

Belongs to the complex I subunit 2 family. Core subunit of respiratory chain NADH dehydrogenase (Complex I) which is composed of 45 different subunits. Interacts with TMEM242.

It is found in the mitochondrion inner membrane. The catalysed reaction is a ubiquinone + NADH + 5 H(+)(in) = a ubiquinol + NAD(+) + 4 H(+)(out). Its function is as follows. Core subunit of the mitochondrial membrane respiratory chain NADH dehydrogenase (Complex I) which catalyzes electron transfer from NADH through the respiratory chain, using ubiquinone as an electron acceptor. Essential for the catalytic activity and assembly of complex I. This Viverra tangalunga (Malayan civet) protein is NADH-ubiquinone oxidoreductase chain 2.